The sequence spans 295 residues: uncharacterized protein (295 aa).

Residues 151-290 form the Resolvase/invertase-type recombinase catalytic domain; the sequence is RTAVCARLSS…RAVAAAARAG (140 aa). The active-site O-(5'-phospho-DNA)-serine intermediate is S159.

This is an uncharacterized protein from Mycobacterium bovis (strain ATCC BAA-935 / AF2122/97).